The following is a 1857-amino-acid chain: Peripheral-type benzodiazepine receptor-associated protein 1 (1857 aa).

Disordered regions lie at residues 1-103 (MEQL…RPED), 284-321 (QRET…QEDA), and 565-629 (PKDL…DTAS). Positions 55–67 (LRSEESSKPKGDG) are enriched in basic and acidic residues. A compositionally biased stretch (polar residues) spans 87–96 (LGQQASSSGP). Residues 289-298 (PLPPSWPPGP) show a composition bias toward pro residues. 2 stretches are compositionally biased toward low complexity: residues 299-316 (ALQA…GEAT) and 603-616 (SLSN…IHNS). In terms of domain architecture, SH3 1 spans 653 to 720 (ARIQVFLARY…PSNFVERVSD (68 aa)). The interval 729 to 789 (PELADLSHSS…PSPEGLGEPP (61 aa)) is disordered. Residues 755-764 (GGQSSVGRSQ) are compositionally biased toward low complexity. 3 Fibronectin type-III domains span residues 791 to 882 (VPYP…ARAG), 884 to 976 (VPSQ…TLPA), and 981 to 1081 (APLD…LAPA). Disordered regions lie at residues 1083–1311 (LPAR…SDEE), 1330–1479 (FSIP…CSRG), and 1501–1601 (YDSE…RGVR). The segment covering 1098 to 1116 (ARAPLASASPGPGDPSSPL) has biased composition (low complexity). A compositionally biased stretch (basic and acidic residues) spans 1138–1147 (EMAKGSHEDP). The span at 1201–1218 (ASSSTQGARAQQAPNTEM) shows a compositional bias: polar residues. Over residues 1259 to 1274 (DIQEEEEEEEEEEEEE) the composition is skewed to acidic residues. A compositionally biased stretch (polar residues) spans 1278–1292 (RTCSFQKQVAGNSIR). Residues 1333-1346 (PEEEEEEEEDEEEE) are compositionally biased toward acidic residues. Composition is skewed to basic and acidic residues over residues 1420 to 1429 (RPPDPREHCS) and 1554 to 1586 (AWEK…EARG). The region spanning 1625–1693 (LPVRIFVALF…PCNMVAEVAV (69 aa)) is the SH3 2 domain. Disordered regions lie at residues 1723–1761 (VYST…VPSA) and 1823–1857 (SNFL…RVQC). The region spanning 1764–1831 (KAPHSMVAAF…PSNFLEGPGP (68 aa)) is the SH3 3 domain.

The protein belongs to the RIMBP family. As to quaternary structure, interacts with RIMS1 and RIMS2. Interacts with TSPO. Interacts with CACNA1A. As to expression, predominantly expressed in brain, pituitary gland and thymus in adults. In adult brain, highest expression found in temporal lobe and the putamen, followed by amygdala, caudate nucleus, cerebral cortex, occipital and frontal lobe. A high expression level is also observed in fetal tissues like brain, heart, kidney and thymus.

It localises to the cytoplasm. The protein resides in the mitochondrion. Required for synaptic transmission regulation. It probably controls the recruitement of voltage-gated calcium channels to the presynaptic membrane, and modulates neurotransmitter release. This Homo sapiens (Human) protein is Peripheral-type benzodiazepine receptor-associated protein 1.